Here is a 41-residue protein sequence, read N- to C-terminus: Large ribosomal subunit protein bL36 (41 aa).

Belongs to the bacterial ribosomal protein bL36 family.

In Rickettsia canadensis (strain McKiel), this protein is Large ribosomal subunit protein bL36.